The chain runs to 227 residues: MAKKERPRPEKLSVYLYIPNIVGYMRVLLNCVAFAVCFSNKPLFSVLYFFSFCCDAVDGWVARRFNQVSTFGAVLDMVTDRVSTACLLVILSQIYRPSLVFLSLLALDIASHWLQMYSTFLAGKSSHKDVKDSTSWLFRLYYGNRIFMCYCCVSCEVLYIILLLIAKNQSENLLNVVVATLTQISPLSFLLALTLFGWSMKQTINVIQMKTAADVCVLYDIEKQQKP.

The next 2 helical transmembrane spans lie at L12–V36 and P42–V61. Residues D55 and D58 each coordinate Mg(2+). The a CDP-1,2-diacyl-sn-glycerol site is built by G59, R63, and S69. A run of 4 helical transmembrane segments spans residues A73–Y95, F101–A122, Y142–I165, and V177–M200. The Mg(2+) site is built by D76 and D80. The active-site Proton acceptor is D80.

It belongs to the CDP-alcohol phosphatidyltransferase class-I family. Mg(2+) serves as cofactor. The cofactor is Mn(2+). In terms of tissue distribution, expressed in stems, flowers, shoots and roots. Present in epidermal tissues.

It is found in the membrane. The catalysed reaction is a CDP-1,2-diacyl-sn-glycerol + myo-inositol = a 1,2-diacyl-sn-glycero-3-phospho-(1D-myo-inositol) + CMP + H(+). In terms of biological role, catalyzes the biosynthesis of phosphatidylinositol (PtdIns) as well as PtdIns:inositol exchange reaction. May thus act to reduce an excessive cellular PtdIns content. The exchange activity is due to the reverse reaction of PtdIns synthase and is dependent on CMP, which is tightly bound to the enzyme. The chain is CDP-diacylglycerol--inositol 3-phosphatidyltransferase 1 (PIS1) from Arabidopsis thaliana (Mouse-ear cress).